We begin with the raw amino-acid sequence, 574 residues long: MTNNKNFADWDSLECKDLHNDLLYGRFALSPLTAKESRLLKKGLREALLTGILCLRFTHAKIQNACKNLNLMNIVGIQESLDEILKNFGKIILTGKLEEFVGKGPFVAILDVRGPLNAMAVDIELPPGIKVEIETQHIATITEPIPFVVELRIELVSSTSKGETGITDEEGFSIDPNPPIQKVNSSIQGYEYGGQTFQTLFIEILSTSPTVPNKALLLVSMKIMNLFQIVLQAKYLDYKELEKGIHVGVFCVSALRAEQSKWIKTILEDALYMVGGRKHQGPLTDEEDDSIDSNFTPVQNLDCRIESYEEEGQTFQRLFLEIWTKSPTEPQEALWEASAKILELFSLFLQTSKENEKDLKQIIKDWTENKRKHQEVLRLLDSEESGSIGWITKMKLAYMHMTLLSMNAMYILLVHRLKPDYDRYNSITDQIVQELRASLNKLREIQKGEYSEQRILVHSIAQEIEAALQKYETTYKLDDFVIKAKKDMITMIWDKERADLESSLIRWESDEDYLNLKKMNPVEMDRSFAELQYQETLRKEQDEQSSQQQKDQMEKRRWERQNRERERKRGNREF.

The tract at residues 1 to 352 is alpha N-terminal domain (alpha-NTD); the sequence is MTNNKNFADW…ELFSLFLQTS (352 aa). The interval 419-574 is alpha C-terminal domain (alpha-CTD); sequence PDYDRYNSIT…RERKRGNREF (156 aa). The interval 534 to 574 is disordered; the sequence is QETLRKEQDEQSSQQQKDQMEKRRWERQNRERERKRGNREF. Basic and acidic residues predominate over residues 551–574; that stretch reads DQMEKRRWERQNRERERKRGNREF.

This sequence belongs to the RNA polymerase alpha chain family. In terms of assembly, in plastids the minimal PEP RNA polymerase catalytic core is composed of four subunits: alpha, beta, beta', and beta''. When a (nuclear-encoded) sigma factor is associated with the core the holoenzyme is formed, which can initiate transcription.

It is found in the plastid. The protein localises to the chloroplast. The enzyme catalyses RNA(n) + a ribonucleoside 5'-triphosphate = RNA(n+1) + diphosphate. Its function is as follows. DNA-dependent RNA polymerase catalyzes the transcription of DNA into RNA using the four ribonucleoside triphosphates as substrates. This chain is Putative DNA-directed RNA polymerase subunit alpha-like 1 (rpoAL1-A), found in Pelargonium hortorum (Common geranium).